Here is an 827-residue protein sequence, read N- to C-terminus: Probable inorganic carbon transporter subunit DabA2 (827 aa).

Residues cysteine 351, aspartate 353, histidine 524, and cysteine 539 each contribute to the Zn(2+) site.

The protein belongs to the inorganic carbon transporter (TC 9.A.2) DabA family. Forms a complex with DabB2, possibly a heterodimer. It depends on Zn(2+) as a cofactor.

It is found in the cell inner membrane. With respect to regulation, uptake of inorganic carbon by cells in the presence of thiosulphate is fully inhibited by the uncouplers carbonyl cyanide m-chlorophenyl hydrazone (CCCP), carbonyl cyanide p-trifluoromethoxyphenyl hydrazone (FCCP), S13 or SF6847. Not inhibited by the ATPase inhibitor N,N-dicyclohexylcarbodiimide (DCCD). Inorganic carbon uptake is inhibited by the ionophore CCCP, suggesting uptake is coupled to a cation gradient. Functionally, part of an energy-coupled inorganic carbon pump; its substrate may be carbon dioxide. Expression of both dabA2 and dabB2 (DAB2) restores growth in ambient air to E.coli deleted of its carbonic anhydrase genes (called CAfree, deletion of 'can' and 'cynT'); neither dabA2 or dabB2 alone is sufficient. Rescue is pH-independent, suggesting it transports CO(2) and not carbonate ions. Together the genes allow greater than normal uptake of inorganic carbon by E.coli. Uptake of carbon dioxide rather than bicarbonate has been suggested based on kinetic calculations. This Halothiobacillus neapolitanus (strain ATCC 23641 / c2) (Thiobacillus neapolitanus) protein is Probable inorganic carbon transporter subunit DabA2.